We begin with the raw amino-acid sequence, 375 residues long: tRNA-specific 2-thiouridylase MnmA (375 aa).

ATP contacts are provided by residues 16–23 (GMSGGVDS) and Met-42. The segment at 102 to 104 (NPD) is interaction with target base in tRNA. Cys-107 functions as the Nucleophile in the catalytic mechanism. An intrachain disulfide couples Cys-107 to Cys-203. Gly-131 contacts ATP. Residues 153 to 155 (KDQ) form an interaction with tRNA region. Catalysis depends on Cys-203, which acts as the Cysteine persulfide intermediate. The interaction with tRNA stretch occupies residues 315–316 (RY).

This sequence belongs to the MnmA/TRMU family.

The protein resides in the cytoplasm. It catalyses the reaction S-sulfanyl-L-cysteinyl-[protein] + uridine(34) in tRNA + AH2 + ATP = 2-thiouridine(34) in tRNA + L-cysteinyl-[protein] + A + AMP + diphosphate + H(+). Functionally, catalyzes the 2-thiolation of uridine at the wobble position (U34) of tRNA, leading to the formation of s(2)U34. In Pseudomonas aeruginosa (strain LESB58), this protein is tRNA-specific 2-thiouridylase MnmA.